The chain runs to 118 residues: Large ribosomal subunit protein bL20 (118 aa).

This sequence belongs to the bacterial ribosomal protein bL20 family.

Binds directly to 23S ribosomal RNA and is necessary for the in vitro assembly process of the 50S ribosomal subunit. It is not involved in the protein synthesizing functions of that subunit. In Psychrobacter arcticus (strain DSM 17307 / VKM B-2377 / 273-4), this protein is Large ribosomal subunit protein bL20.